Here is a 275-residue protein sequence, read N- to C-terminus: UBX domain-containing protein 8 (275 aa).

Residue methionine 1 is a topological domain, cytoplasmic. A helical transmembrane segment spans residues 2–22 (ASRGVVGIFLLSALPLLCLEL). Residues 23 to 33 (RRGKPDLGIKD) lie on the Lumenal side of the membrane. The chain crosses the membrane as a helical span at residues 34–54 (LILLCGRIFLLLALLTLIISV). Residues 55–275 (TTSWVNSFKP…LNVEEKEQSS (221 aa)) are Cytoplasmic-facing. The tract at residues 137–181 (DEDLELDSESQTSFETSNREAAKRRNLPNSVTNISPPAEQPTKKE) is disordered. The 77-residue stretch at 192 to 268 (TAEEVVTVAL…GITVDTVLNV (77 aa)) folds into the UBX domain.

As to quaternary structure, interacts with SYVN1 and VCP.

The protein localises to the endoplasmic reticulum membrane. In terms of biological role, involved in endoplasmic reticulum-associated degradation (ERAD) for misfolded lumenal proteins, possibly by tethering VCP to the endoplasmic reticulum membrane. May play a role in reproduction. Its function is as follows. May play a role in reproduction. The sequence is that of UBX domain-containing protein 8 (UBXN8) from Bos taurus (Bovine).